A 146-amino-acid chain; its full sequence is uncharacterized protein (146 aa).

A run of 5 helical transmembrane segments spans residues 5–27, 32–49, 61–80, 90–108, and 120–142; these read GAMV…YGLA, FVYV…YIIL, LAVM…FFSG, SLGL…ARVF, and FFLK…MLFL.

It is found in the cell membrane. This is an uncharacterized protein from Archaeoglobus fulgidus (strain ATCC 49558 / DSM 4304 / JCM 9628 / NBRC 100126 / VC-16).